A 419-amino-acid polypeptide reads, in one-letter code: 3-isopropylmalate dehydratase large subunit (419 aa).

The [4Fe-4S] cluster site is built by cysteine 300, cysteine 360, and cysteine 363.

The protein belongs to the aconitase/IPM isomerase family. LeuC type 2 subfamily. In terms of assembly, heterodimer of LeuC and LeuD. Requires [4Fe-4S] cluster as cofactor.

It carries out the reaction (2R,3S)-3-isopropylmalate = (2S)-2-isopropylmalate. It functions in the pathway amino-acid biosynthesis; L-leucine biosynthesis; L-leucine from 3-methyl-2-oxobutanoate: step 2/4. In terms of biological role, catalyzes the isomerization between 2-isopropylmalate and 3-isopropylmalate, via the formation of 2-isopropylmaleate. The chain is 3-isopropylmalate dehydratase large subunit from Clostridium botulinum (strain Alaska E43 / Type E3).